Consider the following 896-residue polypeptide: NET1-associated nuclear protein 1 (896 aa).

WD repeat units follow at residues 295–334 (WHIDSVLSLSFSHDGSYLLSGGWEKVMSLWQLETNSQQFL), 490–542 (LQDP…TNWN), 552–595 (GISV…SNWC), and 605–645 (NHFS…ESLE).

In terms of assembly, interacts with snoRNA U3. Interacts with MPP10. Component of the ribosomal small subunit (SSU) processome composed of at least 40 protein subunits and snoRNA U3. In the absence of snoRNA3, forms a complex with other t-UTPs. This complex can associate with pre-18S ribosomal RNAs.

It localises to the nucleus. The protein localises to the nucleolus. Its function is as follows. Involved in nucleolar processing of pre-18S ribosomal RNA. Required for optimal pre-ribosomal RNA transcription by RNA polymerase I together with a subset of U3 proteins required for transcription (t-UTPs). The protein is NET1-associated nuclear protein 1 (NAN1) of Saccharomyces cerevisiae (strain ATCC 204508 / S288c) (Baker's yeast).